Here is a 440-residue protein sequence, read N- to C-terminus: Tetratricopeptide repeat protein 5 (440 aa).

TPR repeat units follow at residues 7–61 (EEVK…EEVV), 68–98 (AQVL…AVKL), 103–130 (VEAW…SGAL), 136–174 (KVSL…AVQM), and 179–216 (GRSW…AEKV). The Nuclear export signal motif lies at 13–24 (LQKLQELVDQLY). Ser203 is subject to Phosphoserine; by ATM. At Ser221 the chain carries Phosphoserine; by CHEK2. Residues 224-253 (PDLHLNRATLHKYEENYGEALEGFSRAAAL) form a TPR 6 repeat. A mediates interaction with 28S rRNA of ribosome-coding tubulin region spans residues 285–287 (KTK).

Interacts with JMY and p300/EP300; the interaction occurs in the nucleus and augments the association between JMY and p300/EP300 in response to DNA damage. Interacts with PRMT5; the interaction is DNA damage-dependent and promotes PRMT5 interaction with p53/TP53 and subsequent methylation. Forms a complex with HSF1 and p300/EP300; these interactions augment chromatin-bound HSF1 and p300/EP300 histone acetyltransferase activity, resulting in enhanced heat-shock-responsive transcription. Interacts with JMY; the interaction occurs in the cytoplasm and results in the inhibition of JYM's nucleation activity. Interacts with ribosome-coding tubulin (via 60S subunit 28S rRNA and protein uL24/RPL26) and the N-terminal of nascent tubulin polypeptide (via alpha-tubulin MREC motif and beta-tubulin MREI motif); these interactions result in tubulin mRNA-targeted degradation. Interacts with ATP5F1B; the interaction occurs in the mitochondria and results in ATP production decrease. Interacts with p53/TP53; the interaction occurs in the mitochondria and results in increased apoptosis. Post-translationally, phosphorylation by ATM kinase induces nuclear accumulation while interfering with nuclear export, and phosphorylation by CHEK2 kinase enhances nuclear stability.

It is found in the nucleus. Its subcellular location is the cytoplasm. It localises to the cytoplasmic vesicle. The protein resides in the mitochondrion matrix. Its function is as follows. Cofactor involved in the regulation of various cellular mechanisms such as actin regulation, autophagy, chromatin regulation and DNA repair. In physiological conditions, interacts with cofactor JMY in the cytoplasm which prevents JMY's actin nucleation activity and ability to activate the Arp2/3 complex. Acts as a negative regulator of nutrient stress-induced autophagy by inhibiting JMY's interaction with MAP1LC3B, thereby preventing autophagosome formation. Involves in tubulin autoregulation by promoting its degradation in response to excess soluble tubulin. To do so, associates with the active ribosome near the ribosome exit tunnel and with nascent tubulin polypeptides early during their translation, triggering tubulin mRNA-targeted degradation. Following DNA damage, phosphorylated by DNA damage responsive protein kinases ATM and CHEK2, leading to its nuclear accumulation and stability. Nuclear TTC5/STRAP promotes the assembly of a stress-responsive p53/TP53 coactivator complex, which includes the coactivators JMY and p300, thereby increasing p53/TP53-dependent transcription and apoptosis. Also recruits arginine methyltransferase PRMT5 to p53/TP53 when DNA is damaged, allowing PRMT5 to methylate p53/TP53. In DNA stress conditions, also prevents p53/TP53 degradation by E3 ubiquitin ligase MDM2. Upon heat-shock stress, forms a chromatin-associated complex with heat-shock factor 1 HSF1 and p300/EP300 to stimulate heat-shock-responsive transcription, thereby increasing cell survival. Mitochondrial TTC5/STRAP interacts with ATP synthase subunit beta ATP5F1B which decreased ATP synthase activity and lowers mitochondrial ATP production, thereby regulating cellular respiration and mitochondrial-dependent apoptosis. Mitochondrial TTC5/STRAP also regulates p53/TP53-mediated apoptosis. In Bos taurus (Bovine), this protein is Tetratricopeptide repeat protein 5 (TTC5).